A 276-amino-acid chain; its full sequence is MTGTTWHLLRTESTSPAENMAIDEAIANWVAKGELKPTLRFYSWAPHAISVGRFQRATRDLDRDALEANNIPVVRRLTGGRAVLHADELTYSVILPESTPALPTNIIESYRLLTEGVRRGYRELGVPAEFSVPLTEEDREALRKPKSAVCFDAASYYELAVDGKKIAGSAQVRHQGAVLQHGSIPLSVDDEVLFDCFAMDETEKQEAKTRFSEKAVALNDTLKRFVSFDEVAAAFETGFKDAFSLTFEPLVFTKEQQAEIDLLVKKYESDEWVWKR.

A BPL/LPL catalytic domain is found at 33-247 (GELKPTLRFY…GFKDAFSLTF (215 aa)). C150 functions as the Acyl-thioester intermediate in the catalytic mechanism.

It belongs to the octanoyltransferase LipM family. In terms of assembly, monomer.

It catalyses the reaction octanoyl-[ACP] + L-lysyl-[protein] = N(6)-octanoyl-L-lysyl-[protein] + holo-[ACP] + H(+). It participates in protein modification; protein lipoylation via endogenous pathway; protein N(6)-(lipoyl)lysine from octanoyl-[acyl-carrier-protein]. In terms of biological role, catalyzes the transfer of endogenously produced octanoic acid from octanoyl-acyl-carrier-protein onto the lipoyl domain of GcvH, an intermediate carrier during protein lipoylation. The polypeptide is Octanoyltransferase LipM (Exiguobacterium sp. (strain ATCC BAA-1283 / AT1b)).